Consider the following 133-residue polypeptide: FPRL1 inhibitory protein (133 aa).

Positions 1 to 28 are cleaved as a signal peptide; it reads MKKNITKTIIASTVIAAGLLTQTNDAKA.

It belongs to the CHIPS/FLIPr family.

The protein resides in the secreted. May be involved in countering the first line of host defense mechanisms. Impairs the leukocyte response to FPRL1 agonists by binding directly to host FPRL1. This is FPRL1 inhibitory protein (flr) from Staphylococcus aureus (strain USA300).